An 83-amino-acid chain; its full sequence is Conotoxin Pu6.1 (83 aa).

An N-terminal signal peptide occupies residues 1-19 (MKLVLAIVLILMLVSLSTG). Positions 20-42 (AEESGQEISMVGPPLYIWDPIPP) are excised as a propeptide. Disulfide bonds link Cys-43–Cys-57, Cys-50–Cys-62, and Cys-56–Cys-78.

Belongs to the conotoxin I3 superfamily. Expressed by the venom duct.

It is found in the secreted. The polypeptide is Conotoxin Pu6.1 (Conus pulicarius (Flea-bitten cone)).